Reading from the N-terminus, the 396-residue chain is Sialyltransferase-like protein 2 (396 aa).

The Cytoplasmic segment spans residues 1-6; sequence MKRRHL. Residues 7–23 form a helical; Signal-anchor for type II membrane protein membrane-spanning segment; it reads PPVLVLLLLSILSLSFR. The Lumenal portion of the chain corresponds to 24–396; sequence RRLLVLQGPP…FTVPPVRLHR (373 aa). Residues N72, N260, and N304 are each glycosylated (N-linked (GlcNAc...) asparagine).

The protein belongs to the glycosyltransferase 29 family.

The protein localises to the golgi apparatus membrane. Does not possess sialyltransferase-like activity in vitro. This is Sialyltransferase-like protein 2 from Oryza sativa subsp. indica (Rice).